We begin with the raw amino-acid sequence, 79 residues long: UPF0337 protein YhjA (79 aa).

The disordered stretch occupies residues M1–K30.

This sequence belongs to the UPF0337 (CsbD) family.

The protein is UPF0337 protein YhjA (yhjA) of Lactococcus lactis subsp. lactis (strain IL1403) (Streptococcus lactis).